A 192-amino-acid polypeptide reads, in one-letter code: uncharacterized protein (192 aa).

One can recognise a Nudix hydrolase domain in the interval 29–160; it reads HRQAAVLIPI…PLDIYRRGDS (132 aa). Positions 67 to 89 match the Nudix box motif; it reads GAVDDTDASVIAAALREAEEEVA. Mg(2+) is bound by residues E83 and E87.

It belongs to the Nudix hydrolase family. PCD1 subfamily. Requires Mn(2+) as cofactor. Mg(2+) is required as a cofactor.

In terms of biological role, probably mediates the hydrolysis of some nucleoside diphosphate derivatives. This is an uncharacterized protein from Shigella flexneri.